The chain runs to 87 residues: Small ribosomal subunit protein uS19 (87 aa).

The disordered stretch occupies residues 1 to 29; that stretch reads MARSLKKGPFVDHHLQKKVDVQNKEGTKK. Residues 9–28 show a composition bias toward basic and acidic residues; sequence PFVDHHLQKKVDVQNKEGTK.

This sequence belongs to the universal ribosomal protein uS19 family.

Protein S19 forms a complex with S13 that binds strongly to the 16S ribosomal RNA. This chain is Small ribosomal subunit protein uS19, found in Protochlamydia amoebophila (strain UWE25).